A 215-amino-acid chain; its full sequence is Urease accessory protein UreG (215 aa).

Residue 24 to 31 (GPVGSGKT) coordinates GTP.

It belongs to the SIMIBI class G3E GTPase family. UreG subfamily. In terms of assembly, homodimer. UreD, UreF and UreG form a complex that acts as a GTP-hydrolysis-dependent molecular chaperone, activating the urease apoprotein by helping to assemble the nickel containing metallocenter of UreC. The UreE protein probably delivers the nickel.

The protein resides in the cytoplasm. Functionally, facilitates the functional incorporation of the urease nickel metallocenter. This process requires GTP hydrolysis, probably effectuated by UreG. The protein is Urease accessory protein UreG of Burkholderia orbicola (strain MC0-3).